The primary structure comprises 159 residues: Large ribosomal subunit protein uL15 (159 aa).

The segment at 1 to 39 is disordered; it reads MKLNELSPADGSTKKRMRVGRGVGSGKGKTAGRGVKGQN. The segment covering 21–35 has biased composition (gly residues); sequence RGVGSGKGKTAGRGV.

This sequence belongs to the universal ribosomal protein uL15 family. In terms of assembly, part of the 50S ribosomal subunit.

Its function is as follows. Binds to the 23S rRNA. This chain is Large ribosomal subunit protein uL15, found in Hyphomonas neptunium (strain ATCC 15444).